Here is a 257-residue protein sequence, read N- to C-terminus: UPF0246 protein LPC_0782 (257 aa).

The protein belongs to the UPF0246 family.

This chain is UPF0246 protein LPC_0782, found in Legionella pneumophila (strain Corby).